The following is a 353-amino-acid chain: Putative glycosyltransferase TagX (353 aa).

The protein belongs to the glycosyltransferase 2 family.

The polypeptide is Putative glycosyltransferase TagX (tagX) (Staphylococcus aureus (strain Mu50 / ATCC 700699)).